A 227-amino-acid polypeptide reads, in one-letter code: Germin-like protein subfamily 3 member 2 (227 aa).

An N-terminal signal peptide occupies residues 1–24 (MEANTLFLLKALCLLCFNVCFTLA). A disulfide bridge connects residues cysteine 34 and cysteine 54. 2 N-linked (GlcNAc...) asparagine glycosylation sites follow: asparagine 56 and asparagine 75. Positions 68–213 (SGLKTAGNFT…AFGLSLKQIG (146 aa)) constitute a Cupin type-1 domain. 4 residues coordinate Mn(2+): histidine 115, histidine 117, glutamate 122, and histidine 161.

Belongs to the germin family. As to quaternary structure, oligomer (believed to be a pentamer but probably hexamer).

Its subcellular location is the secreted. The protein localises to the extracellular space. It is found in the apoplast. In terms of biological role, may play a role in plant defense. Probably has no oxalate oxidase activity even if the active site is conserved. The chain is Germin-like protein subfamily 3 member 2 from Arabidopsis thaliana (Mouse-ear cress).